The following is a 66-amino-acid chain: Photosystem II reaction center protein J (66 aa).

Residues 1–27 (MSGKKSGLPDGRVPDRNPDGTPAVPWK) are disordered. A helical transmembrane segment spans residues 37–57 (LWLVATAGGMAVMFVVGLFFY).

The protein belongs to the PsbJ family. As to quaternary structure, PSII is composed of 1 copy each of membrane proteins PsbA, PsbB, PsbC, PsbD, PsbE, PsbF, PsbH, PsbI, PsbJ, PsbK, PsbL, PsbM, PsbT, PsbX, PsbY, PsbZ, Psb30/Ycf12, peripheral proteins PsbO, CyanoQ (PsbQ), PsbU, PsbV and a large number of cofactors. It forms dimeric complexes.

It localises to the cellular thylakoid membrane. In terms of biological role, one of the components of the core complex of photosystem II (PSII). PSII is a light-driven water:plastoquinone oxidoreductase that uses light energy to abstract electrons from H(2)O, generating O(2) and a proton gradient subsequently used for ATP formation. It consists of a core antenna complex that captures photons, and an electron transfer chain that converts photonic excitation into a charge separation. This is Photosystem II reaction center protein J from Synechococcus sp. (strain RCC307).